The sequence spans 365 residues: DNA replication and repair protein RecF (365 aa).

30-37 (GDNAQGKT) serves as a coordination point for ATP.

It belongs to the RecF family.

It is found in the cytoplasm. Functionally, the RecF protein is involved in DNA metabolism; it is required for DNA replication and normal SOS inducibility. RecF binds preferentially to single-stranded, linear DNA. It also seems to bind ATP. This Alkaliphilus oremlandii (strain OhILAs) (Clostridium oremlandii (strain OhILAs)) protein is DNA replication and repair protein RecF.